Consider the following 272-residue polypeptide: 3',5'-cyclic adenosine monophosphate phosphodiesterase CpdA (272 aa).

Residues D21, H23, D63, N93, H161, H200, and H202 each contribute to the Fe cation site. AMP contacts are provided by residues H23, D63, and 93 to 94 (NH). H202 is a binding site for AMP.

Belongs to the cyclic nucleotide phosphodiesterase class-III family. In terms of assembly, monomer. A divalent metal cation is required as a cofactor.

The catalysed reaction is 3',5'-cyclic AMP + H2O = AMP + H(+). Activated by iron. Other divalent metal ions have no effect. In terms of biological role, hydrolyzes cAMP to 5'-AMP. Plays an important regulatory role in modulating the intracellular concentration of cAMP, thereby influencing cAMP-dependent processes. Specifically required for regulation of virulence factors. Can also hydrolyze cGMP, but cGMP is unlikely to be synthesized by P.aeruginosa and cAMP is probably the biologically relevant substrate for CpdA in vivo. This is 3',5'-cyclic adenosine monophosphate phosphodiesterase CpdA from Pseudomonas aeruginosa.